Consider the following 943-residue polypeptide: MTDYKATLNLPDTAFPMKAGLPQREPQILQRWDSIGLYGKLREIGKDRPKFVLHDGPPYANGSIHIGHAVNKILKDMIIRSKTLAGFDAPYVPGWDCHGLPIEHKVEVTHGKNLSSDQTRELCRAYASEQIEGQKAEFIRLGVLGDWANPYKTMNFANEAGEIRALAEMVKGGFVFKGLKPVNWCFDCGSALAEAEVEYQDKKSATIDVAFPVADEAKLAGAFGLAKLAKPAAIVIWTTTPWTIPANQALNVHPEFNYALVDTGERLLVLAEELVESCLARYNLEGSVIATAPGSALELINFRHPFYDRLSPVYLAEYVELGAGTGVVHSAPAYGEDDFVTCKRYGMVNDDILNPVQSNGVYATSLEFFGGQFIWKANPAIVDKLSEVGALLHTETISHSYMHCWRHKTPLIYRATAQWFVGMDKQPAAGDTLRQRALQAIEDTQFVPAWGQARLHSMIANRPDWCISRQRNWGVPIPFFLNKESGDLHPRTVELMEEVAQRVEQEGIEAWFKMDAAELLGDEAAQYDKISDTLDVWFDSGTTHWHVLRGSHPMGHESGPRADLYLEGSDQHRGWFHSSLLTGCAIDNHAPYRELLTHGFTVDENGRKMSKSLGNVIAPQKVNDTLGADIMRLWVSATDYSGEMAVSDQILQRSADAYRRIRNTARFLLSNLSGFNPATDLLPAEDMLALDRWAVDRTLLLQRELELHYGEYRFWNVYSKVHNFCVQELGGFYLDIIKDRQYTTGANSKARRSAQTALYHISEALVRWIAPILAFTADELWEYLPGERNESVMLNTWYEGLTELPADFELGREYWEGVMAVKVAVNKELEVQRAAKAVGGNLQAEVTLFAEDGLAADLAKLSNELRFVLITSTASLAPFAQAPADAVATEVPGLKLKVVKSAFPKCARCWHCREDVGVHPEHPEICGRCVDNISGAGEVRHYA.

The short motif at Pro58–His68 is the 'HIGH' region element. Glu567 is an L-isoleucyl-5'-AMP binding site. Residues Lys608–Ser612 carry the 'KMSKS' region motif. Lys611 contributes to the ATP binding site. Zn(2+)-binding residues include Cys906, Cys909, Cys926, and Cys929.

This sequence belongs to the class-I aminoacyl-tRNA synthetase family. IleS type 1 subfamily. As to quaternary structure, monomer. It depends on Zn(2+) as a cofactor.

Its subcellular location is the cytoplasm. The catalysed reaction is tRNA(Ile) + L-isoleucine + ATP = L-isoleucyl-tRNA(Ile) + AMP + diphosphate. Catalyzes the attachment of isoleucine to tRNA(Ile). As IleRS can inadvertently accommodate and process structurally similar amino acids such as valine, to avoid such errors it has two additional distinct tRNA(Ile)-dependent editing activities. One activity is designated as 'pretransfer' editing and involves the hydrolysis of activated Val-AMP. The other activity is designated 'posttransfer' editing and involves deacylation of mischarged Val-tRNA(Ile). In Pseudomonas fluorescens (strain ATCC BAA-477 / NRRL B-23932 / Pf-5), this protein is Isoleucine--tRNA ligase.